Here is a 404-residue protein sequence, read N- to C-terminus: G1/S-specific cyclin-E2 (404 aa).

The interval Met-1–Glu-45 is disordered. Over residues Arg-7–Gln-26 the composition is skewed to polar residues. Ser-21 is modified (phosphoserine). Basic and acidic residues predominate over residues Thr-35–Glu-45. At Lys-348 the chain carries N6-lactoyllysine. Ser-383 is subject to Phosphoserine. Thr-392 bears the Phosphothreonine mark.

It belongs to the cyclin family. Cyclin E subfamily. As to quaternary structure, interacts with the CDK2 (in vivo) and CDK3 (in vitro) protein kinases to form a serine/threonine kinase holoenzyme complex. The cyclin subunit imparts substrate specificity to the complex. In terms of processing, phosphorylation by CDK2 triggers its release from CDK2 and degradation via the ubiquitin proteasome pathway. Lactylated at Lys-348. Delactylated by SIRT3.

It localises to the nucleus. Functionally, essential for the control of the cell cycle at the late G1 and early S phase. In Bos taurus (Bovine), this protein is G1/S-specific cyclin-E2 (CCNE2).